We begin with the raw amino-acid sequence, 963 residues long: Aminopeptidase N (963 aa).

Residues 2–8 (AKGFYIS) lie on the Cytoplasmic side of the membrane. Residues 9–32 (KALGILGILLGVAAVATIIALSVV) traverse the membrane as a helical; Signal-anchor for type II membrane protein segment. Positions 33 to 64 (YAQEKNKNAEHVPQAPTSPTITTTAAITLDQS) are cytosolic Ser/Thr-rich junction. The Extracellular segment spans residues 33–963 (YAQEKNKNAE…VVLNWFIEHS (931 aa)). The tract at residues 65–963 (KPWNRYRLPT…VVLNWFIEHS (899 aa)) is metalloprotease. Residues Asn-82 and Asn-124 are each glycosylated (N-linked (GlcNAc...) asparagine). Sulfotyrosine is present on Tyr-171. N-linked (GlcNAc...) asparagine glycosylation is found at Asn-229, Asn-237, Asn-258, Asn-286, Asn-314, and Asn-328. Position 347 to 351 (347 to 351 (GAMEN)) interacts with substrate. His-383 serves as a coordination point for Zn(2+). Glu-384 (proton acceptor) is an active-site residue. Zn(2+) is bound by residues His-387 and Glu-406. N-linked (GlcNAc...) asparagine glycans are attached at residues Asn-506, Asn-556, Asn-569, Asn-622, Asn-646, and Asn-736. The tract at residues 717–813 (KYLRKQVEPL…DQWDFAWGQL (97 aa)) is interaction with TGEV spike glycoprotein. 2 disulfide bridges follow: Cys-758–Cys-765 and Cys-795–Cys-831.

Belongs to the peptidase M1 family. In terms of assembly, homodimer. Interacts with SLC6A19. As to quaternary structure, (Microbial infection) Interacts with TGEV and PRCoV spike glycoprotein. The cofactor is Zn(2+). Sulfated. Post-translationally, N- and O-glycosylated. In terms of processing, may undergo proteolysis and give rise to a soluble form.

It is found in the cell membrane. The enzyme catalyses Release of an N-terminal amino acid, Xaa-|-Yaa- from a peptide, amide or arylamide. Xaa is preferably Ala, but may be most amino acids including Pro (slow action). When a terminal hydrophobic residue is followed by a prolyl residue, the two may be released as an intact Xaa-Pro dipeptide.. Its function is as follows. Broad specificity aminopeptidase which plays a role in the final digestion of peptides generated from hydrolysis of proteins by gastric and pancreatic proteases. Also involved in the processing of various peptides including peptide hormones, such as angiotensin III and IV, neuropeptides, and chemokines. May also be involved the cleavage of peptides bound to major histocompatibility complex class II molecules of antigen presenting cells. May have a role in angiogenesis and promote cholesterol crystallization. It is able to degrade Leu-enkephalin and Met-enkephalin but not cholecystokinin CCK8, neuromedin C (GRP-10), somatostatin-14, substance P and vasoactive intestinal peptide. May have a role in amino acid transport by acting as binding partner of amino acid transporter SLC6A19 and regulating its activity. Functionally, (Microbial infection) In case of porcine transmissible gastroenteritis coronavirus (TGEV) and porcine respiratory coronavirus (PRCoV) infections, serves as a receptor for TGEV and PRCoV spike glycoprotein in a species-specific manner. The protein is Aminopeptidase N (ANPEP) of Sus scrofa (Pig).